A 475-amino-acid polypeptide reads, in one-letter code: Ataxin-10 (475 aa).

Arg-10 is modified (omega-N-methylarginine). 2 positions are modified to phosphoserine: Ser-12 and Ser-77. A Phosphothreonine modification is found at Thr-82. Residue Ser-430 is modified to Phosphoserine.

Belongs to the ataxin-10 family. Homooligomer. Interacts with GNB2. Interacts with IQCB1. Interacts with OGT. In terms of processing, polyubiquitinated. Phosphorylation at Ser-12 by AURKB promotes the association of ATXN10 with PLK1. Phosphorylation at Ser-77 and Thr-82 by PLK1 may play a role in the regulation of cytokinesis and may stimulate the proteasome-mediated degradation of ATXN10.

The protein resides in the cytoplasm. It is found in the perinuclear region. Its subcellular location is the cytoskeleton. The protein localises to the cilium basal body. It localises to the microtubule organizing center. The protein resides in the centrosome. It is found in the centriole. Its subcellular location is the midbody. Its function is as follows. May play a role in the regulation of cytokinesis. May play a role in signaling by stimulating protein glycosylation. Induces neuritogenesis by activating the Ras-MAP kinase pathway and is necessary for the survival of cerebellar neurons. Does not appear to play a major role in ciliogenesis. The protein is Ataxin-10 (ATXN10) of Bos taurus (Bovine).